A 433-amino-acid polypeptide reads, in one-letter code: tRNA(Ile)-lysidine synthase (433 aa).

27–32 (SGGLDS) provides a ligand contact to ATP.

Belongs to the tRNA(Ile)-lysidine synthase family.

The protein localises to the cytoplasm. It carries out the reaction cytidine(34) in tRNA(Ile2) + L-lysine + ATP = lysidine(34) in tRNA(Ile2) + AMP + diphosphate + H(+). Functionally, ligates lysine onto the cytidine present at position 34 of the AUA codon-specific tRNA(Ile) that contains the anticodon CAU, in an ATP-dependent manner. Cytidine is converted to lysidine, thus changing the amino acid specificity of the tRNA from methionine to isoleucine. This chain is tRNA(Ile)-lysidine synthase, found in Legionella pneumophila subsp. pneumophila (strain Philadelphia 1 / ATCC 33152 / DSM 7513).